We begin with the raw amino-acid sequence, 413 residues long: Putative competence-damage inducible protein (413 aa).

The protein belongs to the CinA family.

The polypeptide is Putative competence-damage inducible protein (Acetivibrio thermocellus (strain ATCC 27405 / DSM 1237 / JCM 9322 / NBRC 103400 / NCIMB 10682 / NRRL B-4536 / VPI 7372) (Clostridium thermocellum)).